Consider the following 617-residue polypeptide: BTB/POZ domain-containing protein At3g08570 (617 aa).

The BTB domain maps to 36–106; sequence GDITIVVDGE…CYGINFEITI (71 aa). The region spanning 210–490 is the NPH3 domain; the sequence is EWWIEDLSAL…VRVLYSEQLR (281 aa). The residue at position 431 (Tyr-431) is a Phosphotyrosine. Disordered stretches follow at residues 505-525 and 585-617; these read LSSQ…RDTY and GGGP…ESMF. Over residues 602-617 the composition is skewed to basic and acidic residues; that stretch reads SRLERKTVRSRPESMF.

It belongs to the NPH3 family.

The protein operates within protein modification; protein ubiquitination. May act as a substrate-specific adapter of an E3 ubiquitin-protein ligase complex (CUL3-RBX1-BTB) which mediates the ubiquitination and subsequent proteasomal degradation of target proteins. The sequence is that of BTB/POZ domain-containing protein At3g08570 from Arabidopsis thaliana (Mouse-ear cress).